Here is a 712-residue protein sequence, read N- to C-terminus: Polyribonucleotide nucleotidyltransferase (712 aa).

Mg(2+) is bound by residues Asp485 and Asp491. Positions 552–615 (PRIHTIKINP…EAIRRIEAIT (64 aa)) constitute a KH domain. Positions 621–689 (NRIYEGKVVR…RQGRVRLSIK (69 aa)) constitute an S1 motif domain.

The protein belongs to the polyribonucleotide nucleotidyltransferase family. Component of the RNA degradosome, which is a multiprotein complex involved in RNA processing and mRNA degradation. It depends on Mg(2+) as a cofactor.

Its subcellular location is the cytoplasm. The enzyme catalyses RNA(n+1) + phosphate = RNA(n) + a ribonucleoside 5'-diphosphate. Functionally, involved in mRNA degradation. Catalyzes the phosphorolysis of single-stranded polyribonucleotides processively in the 3'- to 5'-direction. The sequence is that of Polyribonucleotide nucleotidyltransferase from Aeromonas hydrophila subsp. hydrophila (strain ATCC 7966 / DSM 30187 / BCRC 13018 / CCUG 14551 / JCM 1027 / KCTC 2358 / NCIMB 9240 / NCTC 8049).